Reading from the N-terminus, the 247-residue chain is Probable transcriptional regulatory protein SynWH7803_1972 (247 aa).

This sequence belongs to the TACO1 family.

The protein localises to the cytoplasm. This chain is Probable transcriptional regulatory protein SynWH7803_1972, found in Synechococcus sp. (strain WH7803).